A 287-amino-acid polypeptide reads, in one-letter code: Probable ABC transporter extracellular-binding protein YckB (287 aa).

Positions 1–24 (MKSFMHSKAVIFSFTMAFFLILAA) are cleaved as a signal peptide. Cysteine 25 carries N-palmitoyl cysteine lipidation. Residue cysteine 25 is the site of S-diacylglycerol cysteine attachment.

Belongs to the bacterial solute-binding protein 3 family.

The protein resides in the cell membrane. Probably part of a binding-protein-dependent transport system. The polypeptide is Probable ABC transporter extracellular-binding protein YckB (yckB) (Bacillus subtilis (strain 168)).